The sequence spans 1172 residues: NACHT, LRR and PYD domains-containing protein 1b allele 3 (1172 aa).

The tract at residues 1-22 is disordered; sequence MEESPPKQKSNTKVAQHEGQQD. In terms of domain architecture, NACHT spans 126 to 435; that stretch reads QLVIIEGAAG…EFFAAISCIL (310 aa). Residue 132–139 coordinates ATP; the sequence is GAAGIGKS. LRR repeat units follow at residues 627–647 and 684–704; these read NLEG…QSLC and SLTE…RMLC. The interval 789–922 is ZU5; sequence FWGPTGPVAT…GYTVLKNPSF (134 aa). The 284-residue stretch at 789–1072 folds into the FIIND domain; that stretch reads FWGPTGPVAT…LRPALPRIAQ (284 aa). The tract at residues 923 to 1072 is UPA; sequence SPMGDVLRII…LRPALPRIAQ (150 aa). Positions 1082 to 1165 constitute a CARD domain; that stretch reads HFMDQHREQL…HLVMDLLEKS (84 aa).

It belongs to the NLRP family. Post-translationally, in contrast to allele 1 and 2, not able to mediate autocatalytic cleavage. As to expression, expressed in macrophages.

The protein localises to the cytoplasm. Its subcellular location is the cytosol. In contrast to allele 1, does not undergo autocatalytic cleavage within the FIIND domain and its mode of activation remains unclear. In contrast to alleles 1 and 2, allele 3 is not activated by Val-boroPro (Talabostat, PT-100). Not activated by cleavage by B.anthracis lethal toxin (LT) endopeptidase. Not activated by metabolic inhibitors, such as 2-deoxy-D-glucose and sodium azide. Functionally, may act as the sensor component of the Nlrp1b inflammasome, which mediates inflammasome activation in response to various pathogen-associated signals, leading to subsequent pyroptosis. Inflammasomes are supramolecular complexes that assemble in the cytosol in response to pathogens and other damage-associated signals and play critical roles in innate immunity and inflammation. May act as a recognition receptor (PRR), which recognizes specific pathogens and other damage-associated signals and forms an inflammasome complex: the inflammasome directly recruits pro-caspase-1 (proCASP1) independently of PYCARD/ASC and promotes caspase-1 (CASP1) activation, which subsequently cleaves and activates inflammatory cytokines IL1B and IL18 and gasdermin-D (GSDMD), leading to pyroptosis. In the absence of GSDMD expression, the Nlrp1b inflammasome is able to recruit and activate CASP8, leading to activation of gasdermin-E (GSDME). Contrary to Nlrp1b allele 1, allele 3 is not activated by Bacillus anthracis lethal toxin. The absence of autocatalytic cleavage within the FIIND domain, which regulates activation in other alleles, suggests that allele 3 may be non-functional. The chain is NACHT, LRR and PYD domains-containing protein 1b allele 3 from Mus musculus (Mouse).